The sequence spans 739 residues: Phosphoribosylformylglycinamidine synthase subunit PurL (739 aa).

H53 is a catalytic residue. Y56 and K95 together coordinate ATP. Residue E97 coordinates Mg(2+). Residues 98 to 101 and R120 contribute to the substrate site; that span reads SHNH. Residue H99 is the Proton acceptor of the active site. D121 lines the Mg(2+) pocket. Q244 contacts substrate. A Mg(2+)-binding site is contributed by D274. Position 318–320 (318–320) interacts with substrate; sequence ESQ. The ATP site is built by D501 and G538. Residue N539 coordinates Mg(2+). S541 lines the substrate pocket.

The protein belongs to the FGAMS family. Monomer. Part of the FGAM synthase complex composed of 1 PurL, 1 PurQ and 2 PurS subunits.

The protein localises to the cytoplasm. It carries out the reaction N(2)-formyl-N(1)-(5-phospho-beta-D-ribosyl)glycinamide + L-glutamine + ATP + H2O = 2-formamido-N(1)-(5-O-phospho-beta-D-ribosyl)acetamidine + L-glutamate + ADP + phosphate + H(+). It participates in purine metabolism; IMP biosynthesis via de novo pathway; 5-amino-1-(5-phospho-D-ribosyl)imidazole from N(2)-formyl-N(1)-(5-phospho-D-ribosyl)glycinamide: step 1/2. In terms of biological role, part of the phosphoribosylformylglycinamidine synthase complex involved in the purines biosynthetic pathway. Catalyzes the ATP-dependent conversion of formylglycinamide ribonucleotide (FGAR) and glutamine to yield formylglycinamidine ribonucleotide (FGAM) and glutamate. The FGAM synthase complex is composed of three subunits. PurQ produces an ammonia molecule by converting glutamine to glutamate. PurL transfers the ammonia molecule to FGAR to form FGAM in an ATP-dependent manner. PurS interacts with PurQ and PurL and is thought to assist in the transfer of the ammonia molecule from PurQ to PurL. The sequence is that of Phosphoribosylformylglycinamidine synthase subunit PurL from Listeria welshimeri serovar 6b (strain ATCC 35897 / DSM 20650 / CCUG 15529 / CIP 8149 / NCTC 11857 / SLCC 5334 / V8).